A 315-amino-acid polypeptide reads, in one-letter code: Rab effector Noc2 (315 aa).

Positions 41–158 (QRRKQHLSPA…KRSGAWFYKG (118 aa)) constitute a RabBD domain. The segment at 89-146 (GNGLSQCLLCGEVLGFLGSSSVFCKDCRKKVCTKCGIEASPGQKRPLWLCKICSEQRE) adopts an FYVE-type zinc-finger fold. Zn(2+) contacts are provided by C95, C98, C112, C115, C120, C123, C138, and C141. The segment at 170-315 (GRADDPHFRP…APAGPSSCLG (146 aa)) is disordered. Basic and acidic residues-rich tracts occupy residues 184 to 193 (PAEREPRSSE) and 221 to 240 (LEDR…KPWK). Polar residues predominate over residues 262-275 (GCQSSLASGETGTG). The segment covering 298–315 (GRAPAADAAPAGPSSCLG) has biased composition (low complexity).

As to quaternary structure, recruited to dense-core vesicles through specific interaction with RAB27A in endocrine cells. Interacts with RAB3A, RAB3B, RAB3C and RAB3D. Interacts with ZYX. In terms of tissue distribution, moderate to high levels of expression in thyroid, ovary, stomach, heart, pancreas, skeletal muscle, kidney and liver. Also detected in epithelial cells.

It is found in the cytoplasm. Its subcellular location is the cytoplasmic vesicle. It localises to the secretory vesicle membrane. In terms of biological role, rab GTPase effector involved in the late steps of regulated exocytosis, both in endocrine and exocrine cells. Acts as a potential RAB3B effector protein in epithelial cells. The chain is Rab effector Noc2 (RPH3AL) from Homo sapiens (Human).